Here is a 133-residue protein sequence, read N- to C-terminus: Vesicle transport protein GOT1A (133 aa).

Residues 1-9 are Cytoplasmic-facing; it reads MISITEWQK. The chain crosses the membrane as a helical span at residues 10-30; that stretch reads IGVGITGFGVFFILFGILLYF. Position 31 (aspartate 31) is a topological domain, lumenal. Residues 32 to 52 form a helical membrane-spanning segment; that stretch reads SVLLAFGNLLFLTGLSLIIGL. Over 53-68 the chain is Cytoplasmic; it reads RRTFAFFFQRHKLKGT. Residues 69-89 form a helical membrane-spanning segment; the sequence is SFFLGGVAIVLLRWPLLGMLL. At 90–92 the chain is on the lumenal side; sequence EAY. The helical transmembrane segment at 93 to 113 threads the bilayer; that stretch reads GFISLFKGFFPVVFGFLGSAF. Residues 114–133 lie on the Cytoplasmic side of the membrane; it reads NIPFLSTLFQKLQGSSSSMV.

This sequence belongs to the GOT1 family.

It is found in the golgi apparatus membrane. Its function is as follows. May be involved in fusion of ER-derived transport vesicles with the Golgi complex. This chain is Vesicle transport protein GOT1A, found in Mus musculus (Mouse).